Consider the following 131-residue polypeptide: uncharacterized protein (131 aa).

This is an uncharacterized protein from Haemophilus influenzae (strain ATCC 51907 / DSM 11121 / KW20 / Rd).